Consider the following 491-residue polypeptide: Probable protein phosphatase 2C 6 (491 aa).

The span at 1 to 16 (MGLCHSKIDKTTRKET) shows a compositional bias: basic and acidic residues. The tract at residues 1 to 39 (MGLCHSKIDKTTRKETGATSTATTTVERQSSGRLRRPRD) is disordered. Over residues 17-28 (GATSTATTTVER) the composition is skewed to low complexity. Positions 64 to 376 (IACLYTQQGK…DDCAVVCLFL (313 aa)) constitute a PPM-type phosphatase domain. Mn(2+)-binding residues include Asp-100, Gly-101, Asp-321, and Asp-367. The disordered stretch occupies residues 391 to 422 (VNHSHEESTESVTITSSKDADKKEEASTETNE).

It belongs to the PP2C family. It depends on Mg(2+) as a cofactor. Requires Mn(2+) as cofactor.

It catalyses the reaction O-phospho-L-seryl-[protein] + H2O = L-seryl-[protein] + phosphate. The catalysed reaction is O-phospho-L-threonyl-[protein] + H2O = L-threonyl-[protein] + phosphate. This Arabidopsis thaliana (Mouse-ear cress) protein is Probable protein phosphatase 2C 6.